The chain runs to 184 residues: Photosystem I assembly protein Ycf4 (184 aa).

Transmembrane regions (helical) follow at residues 22–42 (FCWA…GTSS) and 57–77 (IVFF…LFIS).

It belongs to the Ycf4 family.

It is found in the plastid. Its subcellular location is the chloroplast thylakoid membrane. In terms of biological role, seems to be required for the assembly of the photosystem I complex. The protein is Photosystem I assembly protein Ycf4 of Helianthus annuus (Common sunflower).